Consider the following 327-residue polypeptide: Vacuolar protein sorting-associated protein 26A (327 aa).

The tract at residues 306–327 (RTNFHQRFESPDSQASAEQPEM) is disordered. A Phosphoserine modification is found at serine 315. Residues 316-327 (PDSQASAEQPEM) show a composition bias toward polar residues.

The protein belongs to the VPS26 family. As to quaternary structure, component of the heterotrimeric retromer cargo-selective complex (CSC), also described as vacuolar protein sorting subcomplex (VPS), formed by VPS26 (VPS26A or VPS26B), VPS29 and VPS35. The CSC has a highly elongated structure with VPS26 and VPS29 binding independently at opposite distal ends of VPS35 as central platform. The CSC is believed to associate with variable sorting nexins to form functionally distinct retromer complex variants. The originally described retromer complex (also called SNX-BAR retromer) is a pentamer containing the CSC and a heterodimeric membrane-deforming subcomplex formed between SNX1 or SNX2 and SNX5 or SNX6 (also called SNX-BAR subcomplex); the respective CSC and SNX-BAR subcomplexes associate with low affinity. The CSC associates with SNX3 to form a SNX3-retromer complex. The CSC associates with SNX27, the WASH complex and the SNX-BAR subcomplex to form the SNX27-retromer complex. Interacts with VPS29, VPS35, SNX27. Interacts with SNX1, SNX2, SNX5, SNX6, SNX3, RAB7A, ECPAS, EHD1, WASHC5, SORL1.

It is found in the cytoplasm. Its subcellular location is the endosome membrane. The protein resides in the early endosome. Its function is as follows. Acts as a component of the retromer cargo-selective complex (CSC). The CSC is believed to be the core functional component of retromer or respective retromer complex variants acting to prevent missorting of selected transmembrane cargo proteins into the lysosomal degradation pathway. The recruitment of the CSC to the endosomal membrane involves RAB7A and SNX3. The SNX-BAR retromer mediates retrograde transport of cargo proteins from endosomes to the trans-Golgi network (TGN) and is involved in endosome-to-plasma membrane transport for cargo protein recycling. The SNX3-retromer mediates the retrograde endosome-to-TGN transport of WLS distinct from the SNX-BAR retromer pathway. The SNX27-retromer is believed to be involved in endosome-to-plasma membrane trafficking and recycling of a broad spectrum of cargo proteins. The CSC complex seems to act as recruitment hub for other proteins, such as the WASH complex and TBC1D5. Required for retrograde transport of lysosomal enzyme receptor IGF2R. Required to regulate transcytosis of the polymeric immunoglobulin receptor (pIgR-pIgA). Required for the endosomal localization of WASHC2 (indicative for the WASH complex). Required for the endosomal localization of TBC1D5. Mediates retromer cargo recognition of SORL1 and is involved in trafficking of SORL1 implicated in sorting and processing of APP. Involved in retromer-independent lysosomal sorting of F2R. Involved in recycling of ADRB2. Acts redundantly with VSP26B in SNX-27 mediated endocytic recycling of SLC2A1/GLUT1. Enhances the affinity of SNX27 for PDZ-binding motifs in cargo proteins. The protein is Vacuolar protein sorting-associated protein 26A (Vps26a) of Mus musculus (Mouse).